The sequence spans 99 residues: Malonate decarboxylase acyl carrier protein (99 aa).

Residue Ser25 is modified to O-(phosphoribosyl dephospho-coenzyme A)serine.

This sequence belongs to the MdcC family. In terms of processing, covalently binds the prosthetic group of malonate decarboxylase.

The protein localises to the cytoplasm. Functionally, subunit of malonate decarboxylase, it is an acyl carrier protein to which acetyl and malonyl thioester residues are bound via a 2'-(5''-phosphoribosyl)-3'-dephospho-CoA prosthetic group and turn over during the catalytic mechanism. The polypeptide is Malonate decarboxylase acyl carrier protein (Pseudomonas putida (strain GB-1)).